Consider the following 99-residue polypeptide: Signal recognition particle 19 kDa protein (99 aa).

Belongs to the SRP19 family. As to quaternary structure, part of the signal recognition particle protein translocation system, which is composed of SRP and FtsY. Archaeal SRP consists of a 7S RNA molecule of 300 nucleotides and two protein subunits: SRP54 and SRP19.

The protein resides in the cytoplasm. Its function is as follows. Involved in targeting and insertion of nascent membrane proteins into the cytoplasmic membrane. Binds directly to 7S RNA and mediates binding of the 54 kDa subunit of the SRP. The protein is Signal recognition particle 19 kDa protein of Pyrococcus horikoshii (strain ATCC 700860 / DSM 12428 / JCM 9974 / NBRC 100139 / OT-3).